We begin with the raw amino-acid sequence, 231 residues long: Orotidine 5'-phosphate decarboxylase (231 aa).

Substrate-binding positions include aspartate 11, lysine 33, 60–69 (DLKFHDIPNT), threonine 120, arginine 181, glutamine 190, glycine 210, and arginine 211. The active-site Proton donor is lysine 62.

Belongs to the OMP decarboxylase family. Type 1 subfamily. As to quaternary structure, homodimer.

It carries out the reaction orotidine 5'-phosphate + H(+) = UMP + CO2. It functions in the pathway pyrimidine metabolism; UMP biosynthesis via de novo pathway; UMP from orotate: step 2/2. Its function is as follows. Catalyzes the decarboxylation of orotidine 5'-monophosphate (OMP) to uridine 5'-monophosphate (UMP). The polypeptide is Orotidine 5'-phosphate decarboxylase (Pseudoalteromonas atlantica (strain T6c / ATCC BAA-1087)).